We begin with the raw amino-acid sequence, 392 residues long: Erythronate-4-phosphate dehydrogenase (392 aa).

Substrate contacts are provided by Ser48 and Thr69. Asp149 provides a ligand contact to NAD(+). Residue Arg215 is part of the active site. Asp239 serves as a coordination point for NAD(+). Residue Glu244 is part of the active site. Catalysis depends on His261, which acts as the Proton donor. An NAD(+)-binding site is contributed by Gly264. Tyr265 is a substrate binding site.

Belongs to the D-isomer specific 2-hydroxyacid dehydrogenase family. PdxB subfamily. As to quaternary structure, homodimer.

It is found in the cytoplasm. The catalysed reaction is 4-phospho-D-erythronate + NAD(+) = (R)-3-hydroxy-2-oxo-4-phosphooxybutanoate + NADH + H(+). The protein operates within cofactor biosynthesis; pyridoxine 5'-phosphate biosynthesis; pyridoxine 5'-phosphate from D-erythrose 4-phosphate: step 2/5. Its function is as follows. Catalyzes the oxidation of erythronate-4-phosphate to 3-hydroxy-2-oxo-4-phosphonooxybutanoate. This is Erythronate-4-phosphate dehydrogenase from Salinibacter ruber (strain DSM 13855 / M31).